Reading from the N-terminus, the 277-residue chain is tRNA pseudouridine synthase B (277 aa).

Residue aspartate 38 is the Nucleophile of the active site.

It belongs to the pseudouridine synthase TruB family. Type 1 subfamily.

It catalyses the reaction uridine(55) in tRNA = pseudouridine(55) in tRNA. Functionally, responsible for synthesis of pseudouridine from uracil-55 in the psi GC loop of transfer RNAs. The chain is tRNA pseudouridine synthase B from Sulfurovum sp. (strain NBC37-1).